The sequence spans 695 residues: MGCRWNPIGFQFSCFMFLIITLQSRSSLSLESEGFVLLKFRARVDSDPHGTLANWNVSDHDHFCSWFGVTCVDNKVQMLNLSGCSLGGTLAPELSQLSELRSLILSKNKLSGDIPNEFASFAKLEFLDLRDNNLNGVVPPELNKVLTPENLLLSGNKFAGFMTVKFLRLQSLYKVQMNKNRELSSVSADVLDCVNRKLGYCVSRRSLITRNKAKAFVLRIRATSRHYMVRRESHGKNYVVNYHPSENETSIFKRRELLEETSNLAAMPAPDTPSPSPEIITIVFPRSSGSFPALTNAKKRIPPLIPPSSPPPLPTNNTIASDPPRKFEEKSKGFKDVWLYVVIGVAAFVAMLIIVAVIFFFRKRAVKSIGPWKTGLSGQLQKAFVTGVPKLNRSELETACEDFSNIIEAFDGYTVYKGTLSSGVEIAVASTAILETREWTRAMEMTYRRRIDTMSRVNHKNFINLIGYCEEDEPFNRMMVFEYAPNGTLFEHLHDKEMEHLDWNARTRIIMGTAYCLQYMHELNPPISHTKLVSSAIYLTDDYAAKVGEVPFSGQTGSKPRKPMSGDLDQSLLPLPPEPETNVYSFGVLMLEIISGKLSDSEEEGSILKWASKYLENDNLRDMIDPTLTTYKEEELEAICDVARHCLKLDESQRPKMKYVVQQLKEVINISQEQATPRLSPLWWAELEILSSEAT.

The N-terminal stretch at 1–29 is a signal peptide; sequence MGCRWNPIGFQFSCFMFLIITLQSRSSLS. Residues 30-340 lie on the Extracellular side of the membrane; it reads LESEGFVLLK…SKGFKDVWLY (311 aa). N-linked (GlcNAc...) asparagine glycosylation is found at Asn-56 and Asn-80. LRR repeat units lie at residues 75–98, 99–121, 123–144, and 147–168; these read KVQM…SQLS, ELRS…FASF, KLEF…ELNK, and TPEN…KFLR. N-linked (GlcNAc...) asparagine glycosylation occurs at Asn-247. Residues 302–325 form a disordered region; sequence PPLIPPSSPPPLPTNNTIASDPPR. Residues 303–314 are compositionally biased toward pro residues; sequence PLIPPSSPPPLP. N-linked (GlcNAc...) asparagine glycosylation is present at Asn-316. A helical transmembrane segment spans residues 341–361; sequence VVIGVAAFVAMLIIVAVIFFF. At 362 to 695 the chain is on the cytoplasmic side; the sequence is RKRAVKSIGP…ELEILSSEAT (334 aa). In terms of domain architecture, Protein kinase spans 363 to 668; the sequence is KRAVKSIGPW…YVVQQLKEVI (306 aa). Residue Ser-652 is modified to Phosphoserine.

This sequence belongs to the protein kinase superfamily. Ser/Thr protein kinase family. In terms of assembly, homodimer. Interacts with MIK1, MIK2 and LURE1.2. LURE1.2 enhances the heterodimerization of MDIS1 with MIK1 or MIK2. Phosphorylated by MIK1. As to expression, expressed in pollen tubes and seedlings.

The protein localises to the cell membrane. Its subcellular location is the endomembrane system. The enzyme catalyses L-seryl-[protein] + ATP = O-phospho-L-seryl-[protein] + ADP + H(+). It catalyses the reaction L-threonyl-[protein] + ATP = O-phospho-L-threonyl-[protein] + ADP + H(+). Functionally, involved in the pollen tube perception of the female signal. This chain is Protein MALE DISCOVERER 1, found in Arabidopsis thaliana (Mouse-ear cress).